A 195-amino-acid polypeptide reads, in one-letter code: Insertion element IS136 uncharacterized protein Atu4601 (195 aa).

Positions 25 to 194 constitute an Integrase catalytic domain; the sequence is MVMRSNLRWC…SPRQFIRAKS (170 aa).

This chain is Insertion element IS136 uncharacterized protein Atu4601, found in Agrobacterium fabrum (strain C58 / ATCC 33970) (Agrobacterium tumefaciens (strain C58)).